Here is a 266-residue protein sequence, read N- to C-terminus: HLA class II histocompatibility antigen, DR beta 4 chain (266 aa).

The N-terminal stretch at 1–29 (MVCLKLPGGSCMAALTVTLTVLSSPLALA) is a signal peptide. Residues 30–124 (GDTQPRFLEQ…VESFTVQRRV (95 aa)) form a beta-1 region. Residues 30 to 227 (GDTQPRFLEQ…SARSESAQSK (198 aa)) lie on the Extracellular side of the membrane. Cystine bridges form between Cys44/Cys108 and Cys146/Cys202. Asn48 is a glycosylation site (N-linked (GlcNAc...) asparagine). A beta-2 region spans residues 125 to 227 (QPKVTVYPSK…SARSESAQSK (103 aa)). An Ig-like C1-type domain is found at 126 to 216 (PKVTVYPSKT…PSMMSPLTVQ (91 aa)). A helical transmembrane segment spans residues 228-250 (MLSGVGGFVLGLLFLGTGLFIYF). Topologically, residues 251-266 (RNQKGHSGLQPTGLLS) are cytoplasmic. A Glycyl lysine isopeptide (Lys-Gly) (interchain with G-Cter in ubiquitin) cross-link involves residue Lys254.

This sequence belongs to the MHC class II family. In terms of assembly, heterodimer of an alpha and a beta subunit; also referred as MHC class II molecule. In the endoplasmic reticulum (ER) it forms a heterononamer; 3 MHC class II molecules bind to a CD74 homotrimer (also known as invariant chain or HLA class II histocompatibility antigen gamma chain). In the endosomal/lysosomal system; CD74 undergoes sequential degradation by various proteases; leaving a small fragment termed CLIP on each MHC class II molecule. MHC class II molecule interacts with HLA_DM, and HLA_DO in B-cells, in order to release CLIP and facilitate the binding of antigenic peptides. Post-translationally, ubiquitinated by MARCH1 and MARCH8 at Lys-254 leading to sorting into the endosome system and down-regulation of MHC class II. When associated with ubiquitination of the alpha subunit of HLA-DR: HLA-DRA 'Lys-244', the down-regulation of MHC class II may be highly effective.

The protein resides in the cell membrane. It localises to the endoplasmic reticulum membrane. It is found in the golgi apparatus. Its subcellular location is the trans-Golgi network membrane. The protein localises to the endosome membrane. The protein resides in the lysosome membrane. It localises to the late endosome membrane. In terms of biological role, binds peptides derived from antigens that access the endocytic route of antigen presenting cells (APC) and presents them on the cell surface for recognition by the CD4 T-cells. The peptide binding cleft accommodates peptides of 10-30 residues. The peptides presented by MHC class II molecules are generated mostly by degradation of proteins that access the endocytic route, where they are processed by lysosomal proteases and other hydrolases. Exogenous antigens that have been endocytosed by the APC are thus readily available for presentation via MHC II molecules, and for this reason this antigen presentation pathway is usually referred to as exogenous. As membrane proteins on their way to degradation in lysosomes as part of their normal turn-over are also contained in the endosomal/lysosomal compartments, exogenous antigens must compete with those derived from endogenous components. Autophagy is also a source of endogenous peptides, autophagosomes constitutively fuse with MHC class II loading compartments. In addition to APCs, other cells of the gastrointestinal tract, such as epithelial cells, express MHC class II molecules and CD74 and act as APCs, which is an unusual trait of the GI tract. To produce a MHC class II molecule that presents an antigen, three MHC class II molecules (heterodimers of an alpha and a beta chain) associate with a CD74 trimer in the ER to form a heterononamer. Soon after the entry of this complex into the endosomal/lysosomal system where antigen processing occurs, CD74 undergoes a sequential degradation by various proteases, including CTSS and CTSL, leaving a small fragment termed CLIP (class-II-associated invariant chain peptide). The removal of CLIP is facilitated by HLA-DM via direct binding to the alpha-beta-CLIP complex so that CLIP is released. HLA-DM stabilizes MHC class II molecules until primary high affinity antigenic peptides are bound. The MHC II molecule bound to a peptide is then transported to the cell membrane surface. In B-cells, the interaction between HLA-DM and MHC class II molecules is regulated by HLA-DO. Primary dendritic cells (DCs) also to express HLA-DO. Lysosomal microenvironment has been implicated in the regulation of antigen loading into MHC II molecules, increased acidification produces increased proteolysis and efficient peptide loading. This Homo sapiens (Human) protein is HLA class II histocompatibility antigen, DR beta 4 chain (HLA-DRB4).